The sequence spans 401 residues: Protein IQ-DOMAIN 24 (401 aa).

A disordered region spans residues 1–48; that stretch reads MGFFGRLFGSKKQEKATPNRRRWSFATRSSHPENDSSSHSSKRRGDED. Residues 105–121 form a calmodulin-binding region; the sequence is EYKAAMKIQSAFRGYLA. IQ domains are found at residues 105-133 and 134-156; these read EYKA…ALVK and LQAL…RMQT. Composition is skewed to low complexity over residues 165–176 and 278–287; these read RASRSSHVSDSS and RSRTGSSSGG. 2 disordered regions span residues 165-186 and 258-296; these read RASR…IPSS and SPRK…PFTP.

Belongs to the IQD family. In terms of assembly, binds to multiple calmodulin (CaM) in the presence of Ca(2+) and CaM-like proteins.

The protein resides in the nucleus. It localises to the nuclear body. The protein localises to the cell membrane. In terms of biological role, may be involved in cooperative interactions with calmodulins or calmodulin-like proteins. Recruits calmodulin proteins to microtubules, thus being a potential scaffold in cellular signaling and trafficking. May associate with nucleic acids and regulate gene expression at the transcriptional or post-transcriptional level. The sequence is that of Protein IQ-DOMAIN 24 from Arabidopsis thaliana (Mouse-ear cress).